Here is a 717-residue protein sequence, read N- to C-terminus: MCGIFGYCNYLVERSRGEIIDTLVDGLQRLEYRGYDSTGIAIDGDEADSTFIYKQIGKVSALKEEITKQNPNRDVTFVSHCGIAHTRWATHGRPEQVNCHPQRSDPEDQFVVVHNGIITNFRELKTLLINKGYKFESDTDTECIAKLYLHLYNTNLQNGHDLDFHELTKLVLLELEGSYGLLCKSCHYPNEVIATRKGSPLLIGVKSEKKLKVDFVDVEFPEENAGQPEIPLKSNNKSFGLGPKKAREFEAGSQNANLLPIAANEFNLRHSQSRAFLSEDGSPTPVEFFVSSDAASVVKHTKKVLFLEDDDLAHIYDGELHIHRSRREVGASMTRSIQTLEMELAQIMKGPYDHFMQKEIYEQPESTFNTMRGRIDYENNKVILGGLKAWLPVVRRARRLIMIACGTSYHSCLATRAIFEELSDIPVSVELASDFLDRKCPVFRDDVCVFVSQSGETADTMLALNYCLERGALTVGIVNSVGSSISRVTHCGVHINAGPEIGVASTKAYTSQYIALVMFALSLSDDRVSKIDRRIEIIQGLKLIPGQIKQVLKLEPRIKKLCATELKDQKSLLLLGRGYQFAAALEGALKIKEISYMHSEGVLAGELKHGVLALVDENLPIIAFGTRDSLFPKVVSSIEQVTARKGHPIIICNENDEVWAQKSKSIDLQTLEVPQTVDCLQGLINIIPLQLMSYWLAVNKGIDVDFPRNLAKSVTVE.

Cys-2 serves as the catalytic For GATase activity. A Glutamine amidotransferase type-2 domain is found at 2 to 318 (CGIFGYCNYL…DDDLAHIYDG (317 aa)). A Phosphoserine modification is found at Ser-253. Thr-334 carries the phosphothreonine modification. At Ser-336 the chain carries Phosphoserine. SIS domains lie at 390 to 529 (WLPV…DRVS) and 562 to 707 (CATE…VDFP).

It catalyses the reaction D-fructose 6-phosphate + L-glutamine = D-glucosamine 6-phosphate + L-glutamate. It participates in nucleotide-sugar biosynthesis; UDP-N-acetyl-alpha-D-glucosamine biosynthesis; alpha-D-glucosamine 6-phosphate from D-fructose 6-phosphate: step 1/1. In terms of biological role, involved in amino sugar synthesis (formation of chitin, supplies the amino sugars of asparagine-linked oligosaccharides of glycoproteins). This chain is Glutamine--fructose-6-phosphate aminotransferase [isomerizing] (GFA1), found in Saccharomyces cerevisiae (strain ATCC 204508 / S288c) (Baker's yeast).